The sequence spans 777 residues: Endonuclease MutS2 (777 aa).

328 to 335 lines the ATP pocket; sequence GPNTGGKT. The 76-residue stretch at 702–777 folds into the Smr domain; sequence LDLRGKRYEE…GSGATIVIFK (76 aa).

It belongs to the DNA mismatch repair MutS family. MutS2 subfamily. In terms of assembly, homodimer. Binds to stalled ribosomes, contacting rRNA.

Functionally, endonuclease that is involved in the suppression of homologous recombination and thus may have a key role in the control of bacterial genetic diversity. Acts as a ribosome collision sensor, splitting the ribosome into its 2 subunits. Detects stalled/collided 70S ribosomes which it binds and splits by an ATP-hydrolysis driven conformational change. Acts upstream of the ribosome quality control system (RQC), a ribosome-associated complex that mediates the extraction of incompletely synthesized nascent chains from stalled ribosomes and their subsequent degradation. Probably generates substrates for RQC. This chain is Endonuclease MutS2, found in Streptococcus gordonii (strain Challis / ATCC 35105 / BCRC 15272 / CH1 / DL1 / V288).